Here is a 372-residue protein sequence, read N- to C-terminus: MGTRNRKLLFFLHYQRYLGLTNLDFSKSLHIYWLHGTWSSTAIQIVVVGVFMAALLGALAESLYYMETKSQTGNTFDNAVILTTSVTQLLANLWLRSQQKSQVNLLQRLSQVVELLQFEPYAVPQFRWLYRIWLLVCLIYGAMVTHFGINWLTTMQISRVLTLIGFVYRCVLANFQFTCYTGMVVILKKLLQVQVKQLEHLVSTTTISMAGVAGCLRTHDEILLLGQRELIAVYGGVILFLFIYQVMQCILIFYISNLEGFHSSNDLVLIFCWLAPMLFYLILPLVVNDIHNQANKTAKMLTKVPRTGTGLDRMIEKFLLKNLRQKPILTAYGFFALDKSTLFKLFTAIFTYMVILVQFKEMENSTKSINKF.

At 1 to 32 (MGTRNRKLLFFLHYQRYLGLTNLDFSKSLHIY) the chain is on the cytoplasmic side. The helical transmembrane segment at 33–53 (WLHGTWSSTAIQIVVVGVFMA) threads the bilayer. Residues 54–59 (ALLGAL) lie on the Extracellular side of the membrane. Residues 60–80 (AESLYYMETKSQTGNTFDNAV) traverse the membrane as a helical segment. Over 81–122 (ILTTSVTQLLANLWLRSQQKSQVNLLQRLSQVVELLQFEPYA) the chain is Cytoplasmic. Residues 123–143 (VPQFRWLYRIWLLVCLIYGAM) traverse the membrane as a helical segment. Topologically, residues 144-147 (VTHF) are extracellular. Residues 148–168 (GINWLTTMQISRVLTLIGFVY) traverse the membrane as a helical segment. The Cytoplasmic portion of the chain corresponds to 169–224 (RCVLANFQFTCYTGMVVILKKLLQVQVKQLEHLVSTTTISMAGVAGCLRTHDEILL). A helical transmembrane segment spans residues 225 to 245 (LGQRELIAVYGGVILFLFIYQ). Topologically, residues 246–265 (VMQCILIFYISNLEGFHSSN) are extracellular. The chain crosses the membrane as a helical span at residues 266–286 (DLVLIFCWLAPMLFYLILPLV). Topologically, residues 287–348 (VNDIHNQANK…KSTLFKLFTA (62 aa)) are cytoplasmic. The chain crosses the membrane as a helical span at residues 349–368 (IFTYMVILVQFKEMENSTKS). A topological domain (extracellular) is located at residue isoleucine 369.

It belongs to the insect chemoreceptor superfamily. Gustatory receptor (GR) family. Gr21a subfamily. In terms of tissue distribution, expressed in the adult labellar chemosensory neurons. In larvae, is expressed in neurons of the terminal external chemosensory organ, as well as in the dorsal and posterior pharyngeal sense organs.

The protein resides in the cell membrane. Gustatory receptor which mediates acceptance or avoidance behavior, depending on its substrates. Plays a role in sustaining courtship behavior in males, possibly through the reception of a stimulating arrestant pheromone. In Drosophila melanogaster (Fruit fly), this protein is Gustatory and pheromone receptor 39a, isoform B (Gr39a).